A 471-amino-acid chain; its full sequence is Probable ribonuclease FAU-1 (471 aa).

This sequence belongs to the FAU-1 family.

Functionally, probable RNase involved in rRNA stability through maturation and/or degradation of precursor rRNAs. Preferentially cleaves UA sequences in the 5' precursor region of 5S rRNA. Binds to RNA in loop regions with AU-rich sequences. This chain is Probable ribonuclease FAU-1, found in Thermococcus kodakarensis (strain ATCC BAA-918 / JCM 12380 / KOD1) (Pyrococcus kodakaraensis (strain KOD1)).